A 467-amino-acid polypeptide reads, in one-letter code: A-type ATP synthase subunit B (467 aa).

A disordered region spans residues 95 to 114 (GKGQPRDHMPLPPPEDFRDV).

The protein belongs to the ATPase alpha/beta chains family. In terms of assembly, has multiple subunits with at least A(3), B(3), C, D, E, F, H, I and proteolipid K(x).

It is found in the cell membrane. Functionally, component of the A-type ATP synthase that produces ATP from ADP in the presence of a proton gradient across the membrane. The B chain is a regulatory subunit. The chain is A-type ATP synthase subunit B from Pyrobaculum islandicum (strain DSM 4184 / JCM 9189 / GEO3).